Here is a 145-residue protein sequence, read N- to C-terminus: Aspartate 1-decarboxylase (145 aa).

The active-site Schiff-base intermediate with substrate; via pyruvic acid is serine 25. Pyruvic acid (Ser) is present on serine 25. Threonine 57 is a substrate binding site. Tyrosine 58 functions as the Proton donor in the catalytic mechanism. 73 to 75 (GAA) provides a ligand contact to substrate.

This sequence belongs to the PanD family. As to quaternary structure, heterooctamer of four alpha and four beta subunits. It depends on pyruvate as a cofactor. Post-translationally, is synthesized initially as an inactive proenzyme, which is activated by self-cleavage at a specific serine bond to produce a beta-subunit with a hydroxyl group at its C-terminus and an alpha-subunit with a pyruvoyl group at its N-terminus.

The protein localises to the cytoplasm. It carries out the reaction L-aspartate + H(+) = beta-alanine + CO2. It participates in cofactor biosynthesis; (R)-pantothenate biosynthesis; beta-alanine from L-aspartate: step 1/1. Catalyzes the pyruvoyl-dependent decarboxylation of aspartate to produce beta-alanine. In Micrococcus luteus (strain ATCC 4698 / DSM 20030 / JCM 1464 / CCM 169 / CCUG 5858 / IAM 1056 / NBRC 3333 / NCIMB 9278 / NCTC 2665 / VKM Ac-2230) (Micrococcus lysodeikticus), this protein is Aspartate 1-decarboxylase.